A 1005-amino-acid polypeptide reads, in one-letter code: MEDLQPINPNTDSPTETGATTIEARFSYFCKGRLTMDDNALEEAMKLFNQSKHLFMTNASALGSGTPEEAEHYWFAFILFSMKRLSKKNDAEDAAKSNENSFKLYQILRVAKLNFVDFFKELPQFIVKTGPILSNLYGSDWETRLQAKELQANFVHLSLLSKYYKRAFKTLFKPSHDNVEGQSAVANSADYISNCHRFGWLLFLALRVHAFSRFKDLVTCTNGLVSILAILIIHIPARFRNFSMSDSSHFVKKDDKVVDLLASLCNMYETSEDELRKTMVRTNIVVEEILKKDPSMASECTNGNLDNIDTDDLTYFQDLLEEQSLSSDLDILEKDYDDAMLLEGELDERLFINDEESLLGSSSLSGGAINMTGTKRKIDSMTSPTKTITSPLSPYKSPSKMISTPVSTAMTTAKWLRTVVSPLSSFPSVDLTRFLQSCDKDVTSDVIKRARIILEAIFPSSGIPDRTVLSNTQTTNLMDNIWAEQRRLEALKLYYRVLHAMCKAESQILHGNNLTSLLTNERFHRCMLACSAELVLATHKTVTMLFPAVLERTGITAFDLSKVIESFIRHEESLPRELRRHLNSLEERLLESMVWEKGSSMYNSLTIARPNLSNEINRLGLLAGPMPSLDAIALQCNMSCGGLPPVPKRDTSPGKSGEIRSPKRVCNEYRSVLVERNSFTSPVKDRLLGIGNLKSKILSPALQSAFASPTRPHPTRGETCAETAVNLFFSKIVKLAAVRINGMVERMQLTQQIRERVYCLFQQILGQRTSLFFNRHIDQIILCCFYGVAKITQLSLTFKEIIFNYRKQPHCKPQVFRAVFVDDRSSSRRGKTGQDHVDIIMFYNEIFIPSVKPLLVELAPSNVPKNPNNQVSETNKKDESGPCPCPGSPKVSSFPSLPDMSPKKVSAVHNVYVSPLRSTKMDALISHGSKSYYACVGESTHAYQSPSKDLTAINNRLNGTRKVRGSLNFDEVDVGLVSDSLVSQSLYLQNGKGPASSSGQELKTE.

The segment at 404-605 is domain A; sequence TPVSTAMTTA…EKGSSMYNSL (202 aa). Positions 404 to 853 are pocket; sequence TPVSTAMTTA…NEIFIPSVKP (450 aa). A spacer region spans residues 606 to 722; that stretch reads TIARPNLSNE…HPTRGETCAE (117 aa). The segment at 723-853 is domain B; the sequence is TAVNLFFSKI…NEIFIPSVKP (131 aa). Polar residues predominate over residues 863–873; the sequence is VPKNPNNQVSE. A disordered region spans residues 863 to 899; that stretch reads VPKNPNNQVSETNKKDESGPCPCPGSPKVSSFPSLPD.

Belongs to the retinoblastoma protein (RB) family.

The protein resides in the nucleus. Regulator of biological processes that recruits a histone deacetylase to control gene transcription. May play a role in the entry into mitosis, negatively regulating the cell proliferation. Formation of stable complexes with geminiviridae replication-associated proteins may create a cellular environment which favors viral DNA replication. The protein is Retinoblastoma-related protein (RBR) of Pilosella piloselloides (Glaucous king-devil hawkweed).